Reading from the N-terminus, the 286-residue chain is ATP synthase gamma chain (286 aa).

It belongs to the ATPase gamma chain family. F-type ATPases have 2 components, CF(1) - the catalytic core - and CF(0) - the membrane proton channel. CF(1) has five subunits: alpha(3), beta(3), gamma(1), delta(1), epsilon(1). CF(0) has three main subunits: a, b and c.

It is found in the cell inner membrane. Functionally, produces ATP from ADP in the presence of a proton gradient across the membrane. The gamma chain is believed to be important in regulating ATPase activity and the flow of protons through the CF(0) complex. This chain is ATP synthase gamma chain, found in Pseudomonas putida (strain ATCC 700007 / DSM 6899 / JCM 31910 / BCRC 17059 / LMG 24140 / F1).